The chain runs to 1099 residues: Transmembrane protein 132D (1099 aa).

An N-terminal signal peptide occupies residues 1-30 (MCPSEMGTLWHHWSPVLISLAALFSKVTEG). Residues 31 to 915 (RGILESIQRF…LMQASKGLSD (885 aa)) lie on the Extracellular side of the membrane. An N-linked (GlcNAc...) asparagine glycan is attached at N505. The segment at 797–858 (FGQNDANPNT…LMEGRGTTTD (62 aa)) is disordered. A compositionally biased stretch (low complexity) spans 835-848 (GSQEGQYYGSSSMG). A helical transmembrane segment spans residues 916–936 (LEIGMYALLGVFCLAILVFLI). At 937-1099 (NCVTFALKYR…NYMERLHENV (163 aa)) the chain is on the cytoplasmic side.

It belongs to the TMEM132 family. As to quaternary structure, interacts (via C-terminus) with NCKAP. Expressed in mature oligodendrocytes. Detected in the brain, lung, pancreas and testis. Highly expressed in mature neurons of the adult nervous system.

Its subcellular location is the membrane. Its function is as follows. Regulate neuronals morphology via inhibition of the WAVE regulatory complex (WCR), a complex that controls F-actin cytoskeletal dynamics. This chain is Transmembrane protein 132D, found in Homo sapiens (Human).